Reading from the N-terminus, the 693-residue chain is Polyribonucleotide nucleotidyltransferase (693 aa).

Residues Asp-489 and Asp-495 each contribute to the Mg(2+) site. The region spanning 556–615 is the KH domain; that stretch reads PQIHVMNINPAKIKDVVGRGGATVKGIVEKTGAQIDTSDSGEVKVFAKDKKSMDMAVAMI. An S1 motif domain is found at 625 to 693; it reads GQVYKGKIVK…GRVKLSLVAR (69 aa).

Belongs to the polyribonucleotide nucleotidyltransferase family. In terms of assembly, component of the RNA degradosome, which is a multiprotein complex involved in RNA processing and mRNA degradation. The cofactor is Mg(2+).

The protein localises to the cytoplasm. It carries out the reaction RNA(n+1) + phosphate = RNA(n) + a ribonucleoside 5'-diphosphate. Functionally, involved in mRNA degradation. Catalyzes the phosphorolysis of single-stranded polyribonucleotides processively in the 3'- to 5'-direction. This chain is Polyribonucleotide nucleotidyltransferase, found in Francisella tularensis subsp. tularensis (strain WY96-3418).